Consider the following 262-residue polypeptide: tRNA pseudouridine synthase B (262 aa).

Residue D77 is the Nucleophile of the active site.

Belongs to the pseudouridine synthase TruB family. Type 1 subfamily.

The enzyme catalyses uridine(55) in tRNA = pseudouridine(55) in tRNA. In terms of biological role, responsible for synthesis of pseudouridine from uracil-55 in the psi GC loop of transfer RNAs. This chain is tRNA pseudouridine synthase B, found in Protochlamydia amoebophila (strain UWE25).